A 210-amino-acid chain; its full sequence is Thioredoxin-like 3-1, chloroplastic (210 aa).

The 130-residue stretch at 81–210 (WRLKAFWSNI…EVRELINKFV (130 aa)) folds into the Thioredoxin domain. Catalysis depends on nucleophile residues Cys-130 and Cys-133. A disulfide bond links Cys-130 and Cys-133.

It belongs to the thioredoxin family.

The protein localises to the plastid. It localises to the chloroplast stroma. Functionally, probable thiol-disulfide oxidoreductase that may participate in various redox reactions. This is Thioredoxin-like 3-1, chloroplastic (WCRKC1) from Arabidopsis thaliana (Mouse-ear cress).